The following is a 250-amino-acid chain: tRNA pseudouridine synthase A (250 aa).

The Nucleophile role is filled by Asp-52. Tyr-111 contributes to the substrate binding site.

Belongs to the tRNA pseudouridine synthase TruA family. Homodimer.

The enzyme catalyses uridine(38/39/40) in tRNA = pseudouridine(38/39/40) in tRNA. In terms of biological role, formation of pseudouridine at positions 38, 39 and 40 in the anticodon stem and loop of transfer RNAs. This chain is tRNA pseudouridine synthase A, found in Methylorubrum extorquens (strain CM4 / NCIMB 13688) (Methylobacterium extorquens).